The primary structure comprises 923 residues: Phosphoenolpyruvate carboxylase (923 aa).

Residues histidine 149 and lysine 585 contribute to the active site.

The protein belongs to the PEPCase type 1 family. It depends on Mg(2+) as a cofactor.

It carries out the reaction oxaloacetate + phosphate = phosphoenolpyruvate + hydrogencarbonate. Functionally, forms oxaloacetate, a four-carbon dicarboxylic acid source for the tricarboxylic acid cycle. This chain is Phosphoenolpyruvate carboxylase, found in Nocardia farcinica (strain IFM 10152).